The sequence spans 127 residues: Turripeptide OL172 (127 aa).

An N-terminal signal peptide occupies residues 1 to 20 (MFSTLIFLTAVTLLMMPSQT). The propeptide occupies 42-43 (QR). Q44 is subject to Pyrrolidone carboxylic acid. The propeptide occupies 73–75 (QRK). Position 76 is a pyrrolidone carboxylic acid (Q76). A propeptide spanning residues 104–106 (QRK) is cleaved from the precursor. Pyrrolidone carboxylic acid is present on Q107.

Post-translationally, the turripeptide OL172 conotoxin-like contains 2 disulfide bonds. In terms of tissue distribution, expressed by the venom duct.

The protein resides in the secreted. In terms of biological role, acts as a neurotoxin by inhibiting an ion channel. The sequence is that of Turripeptide OL172 from Iotyrris olangoensis (Sea snail).